Reading from the N-terminus, the 343-residue chain is MGSADDRRFEVLRAIVADFVATKEPIGSKAIVERHNLGVSSATVRNDMAVLEAEGYITQPHTSSGRVPTEKGYREFVDRLQDVKPMSGAERRAILQFLESGVDLDDVLRRAVRLLAQLTRQVAVVQYPTLTTSTVRRLEVVALTPARLLLVVITDTGRVDQRIVELGDGIDDGQLAQLRDMLGSALEGKPLAAASVAVSDLAVHLNGQGGLADAVGRSATVLVETLVEHTEERLLLGGTANLTRNTADFGGSLRSVLEALEEQVVVLRLLAKQQEAGKVTVRIGHETEAEEMAGTSVISTAYGSAGKVFGGMGVLGPTRMDYPGTIANVAAVALYIGEVLGNR.

Belongs to the HrcA family.

Its function is as follows. Negative regulator of class I heat shock genes (grpE-dnaK-dnaJ and groELS operons). Prevents heat-shock induction of these operons. This is Heat-inducible transcription repressor HrcA from Mycolicibacterium vanbaalenii (strain DSM 7251 / JCM 13017 / BCRC 16820 / KCTC 9966 / NRRL B-24157 / PYR-1) (Mycobacterium vanbaalenii).